A 123-amino-acid chain; its full sequence is Small ribosomal subunit protein uS12 (123 aa).

Asp89 is subject to 3-methylthioaspartic acid.

The protein belongs to the universal ribosomal protein uS12 family. As to quaternary structure, part of the 30S ribosomal subunit. Contacts proteins S8 and S17. May interact with IF1 in the 30S initiation complex.

In terms of biological role, with S4 and S5 plays an important role in translational accuracy. Its function is as follows. Interacts with and stabilizes bases of the 16S rRNA that are involved in tRNA selection in the A site and with the mRNA backbone. Located at the interface of the 30S and 50S subunits, it traverses the body of the 30S subunit contacting proteins on the other side and probably holding the rRNA structure together. The combined cluster of proteins S8, S12 and S17 appears to hold together the shoulder and platform of the 30S subunit. The chain is Small ribosomal subunit protein uS12 from Prochlorococcus marinus (strain MIT 9211).